Reading from the N-terminus, the 615-residue chain is Fibrinogen alpha chain (615 aa).

Residues Met1 to Thr19 form the signal peptide. The stretch at Cys71–Gly602 forms a coiled coil. Residues Phe267 to Leu427 are disordered. The segment covering Gly293–Pro302 has biased composition (polar residues). A glycan (O-linked (GalNAc...) threonine) is linked at Thr325. The segment covering Gly373–Gly396 has biased composition (low complexity). Cys455 and Cys485 form a disulfide bridge. The segment at Glu530–Pro615 is disordered. Over residues Ser537–Lys549 the composition is skewed to low complexity. A compositionally biased stretch (polar residues) spans Gln550–Arg560. Residues Gln591 to Arg601 are compositionally biased toward basic residues.

As to quaternary structure, heterohexamer; disulfide linked. Contains 2 sets of 3 non-identical chains (alpha, beta and gamma). The 2 heterotrimers are in head to head conformation with the N-termini in a small central domain. In terms of processing, conversion of fibrinogen to fibrin is triggered by thrombin, which cleaves fibrinopeptides A and B from alpha and beta chains, and thus exposes the N-terminal polymerization sites responsible for the formation of the soft clot. The soft clot is converted into the hard clot by factor XIIIA which catalyzes the epsilon-(gamma-glutamyl)lysine cross-linking between gamma chains (stronger) and between alpha chains (weaker) of different monomers. Forms F13A-mediated cross-links between a glutamine and the epsilon-amino group of a lysine residue, forming fibronectin-fibrinogen heteropolymers.

It localises to the secreted. Functionally, cleaved by the protease thrombin to yield monomers which, together with fibrinogen beta (FGB) and fibrinogen gamma (FGG), polymerize to form an insoluble fibrin matrix. Fibrin has a major function in hemostasis as one of the primary components of blood clots. In addition, functions during the early stages of wound repair to stabilize the lesion and guide cell migration during re-epithelialization. Was originally thought to be essential for platelet aggregation, based on in vitro studies using anticoagulated blood. However, subsequent studies have shown that it is not absolutely required for thrombus formation in vivo. Enhances expression of SELP in activated platelets via an ITGB3-dependent pathway. Maternal fibrinogen is essential for successful pregnancy. Fibrin deposition is also associated with infection, where it protects against IFNG-mediated hemorrhage. May also facilitate the immune response via both innate and T-cell mediated pathways. This is Fibrinogen alpha chain (FGA) from Bos taurus (Bovine).